Here is a 160-residue protein sequence, read N- to C-terminus: Ribosomal RNA large subunit methyltransferase H (160 aa).

Residues L76 and G108 each coordinate S-adenosyl-L-methionine.

It belongs to the RNA methyltransferase RlmH family. Homodimer.

It localises to the cytoplasm. It carries out the reaction pseudouridine(1915) in 23S rRNA + S-adenosyl-L-methionine = N(3)-methylpseudouridine(1915) in 23S rRNA + S-adenosyl-L-homocysteine + H(+). In terms of biological role, specifically methylates the pseudouridine at position 1915 (m3Psi1915) in 23S rRNA. This is Ribosomal RNA large subunit methyltransferase H from Rhodopseudomonas palustris (strain BisB18).